A 311-amino-acid chain; its full sequence is Olfactory receptor 6C3 (311 aa).

Topologically, residues 1-22 are extracellular; it reads MNHTMVTEFVLLGLSDDPDLQI. An N-linked (GlcNAc...) asparagine glycan is attached at asparagine 2. The chain crosses the membrane as a helical span at residues 23 to 43; it reads VIFLFLFITYILSVTGNLTII. The Cytoplasmic segment spans residues 44-51; it reads TLTFVDSH. Residues 52–72 form a helical membrane-spanning segment; it reads LQTPMYFFLRNFSFLEISFTT. The Extracellular segment spans residues 73 to 96; that stretch reads VCIPRFLGAIITRNKTISYNNCAA. Cysteine 94 and cysteine 186 are disulfide-bonded. Residues 97 to 117 traverse the membrane as a helical segment; sequence QLFFFIFMGVTEFYILTAMSY. Residues 118 to 136 lie on the Cytoplasmic side of the membrane; it reads DRYVAICKPLHYTSIMNRK. Residues 137-157 form a helical membrane-spanning segment; that stretch reads LCTLLVLCAWLSGFLTIFPPL. At 158–194 the chain is on the extracellular side; the sequence is MLLLQLDYCASNVIDHFACDYFPLLQLSCSDTWLLEV. The helical transmembrane segment at 195–214 threads the bilayer; sequence IGFYFALVTLLFTLALVILS. At 215–234 the chain is on the cytoplasmic side; the sequence is YMYIIRTILRIPSASQRKKA. Residues 235 to 255 traverse the membrane as a helical segment; sequence FSTCSSHMIVISISYGSCIFM. Topologically, residues 256 to 268 are extracellular; sequence YANPSAKEKASLT. A helical membrane pass occupies residues 269-289; it reads KGIAILNTSVAPMLNPFIYTL. Residues 290-311 are Cytoplasmic-facing; that stretch reads RNQQVKQAFKNVVHKVVFYANQ.

It belongs to the G-protein coupled receptor 1 family.

Its subcellular location is the cell membrane. Its function is as follows. Odorant receptor. The protein is Olfactory receptor 6C3 (OR6C3) of Homo sapiens (Human).